A 614-amino-acid polypeptide reads, in one-letter code: MDREIRILHTADTHLGYRQYHSEVRRQDFFKAFETVIQDAVDMQVDAVVHAGDLFDSRNPTLEDLLETMNILSRLKAVDIPFFGIVGNHESKQNTQWLDLFEEMGLAERLGKTPKLVGNTTIYGIDSVPKSKIPLYDYSGFELPDSLPENCKKLLVMHQIVQPFPYADWDCAEVLENLPFKVDAILLGDYHKYEKIKVGEEETWATYSGSTERNSASENEPRSYNIITLSGEGLEISRRTIPTRNFLFITAKIDGEEKPYEQIFSAINEHLEEIPESVVFLDISGNSDSVLSFSEIEEYLLSKGALVSKVKDARIKETLPEEVAKVAFSDPDHAVAEEIRRMSLNDGGLIVDEIIRSPDVVRSRVDEETENRLLRLIETIDFEDPDFRIEIPASPISSTDSIDPVSPINHPVSSADSVSAVSPESSADHVSPDIIENNEKPIPAVEAEKIETLDPAGETEFVAGIAGKTETFRAPVRIKNSESLNEALKKSYEAPDKVREAPDVNPEPPEPLPAFKNIGSPETFGSCETTVSSEVPEKGGERTELEDDAVNKTEKETGKLSGFGVEAGSEKEDADRIEKPAHVPDKAEKPVKQSQRKGKGKSAVPRQYNLGDYL.

Mn(2+) is bound by residues Asp-12, His-14, Asp-53, and Asn-88. His-89 serves as the catalytic Proton donor. Positions 158, 189, and 191 each coordinate Mn(2+). Disordered regions lie at residues 393 to 434 and 487 to 614; these read ASPI…SPDI and ALKK…GDYL. The segment covering 411 to 425 has biased composition (low complexity); it reads PVSSADSVSAVSPES. Composition is skewed to basic and acidic residues over residues 487–502, 535–558, and 568–591; these read ALKK…REAP, VPEK…KETG, and GSEK…EKPV.

This sequence belongs to the MRE11/RAD32 family. Homodimer. Forms a heterotetramer composed of two Mre11 subunits and two Rad50 subunits. The cofactor is Mn(2+).

Its activity is regulated as follows. Nuclease activity is regulated by Rad50. In terms of biological role, part of the Rad50/Mre11 complex, which is involved in the early steps of DNA double-strand break (DSB) repair. The complex may facilitate opening of the processed DNA ends to aid in the recruitment of HerA and NurA. Mre11 binds to DSB ends and has both double-stranded 3'-5' exonuclease activity and single-stranded endonuclease activity. The chain is DNA double-strand break repair protein Mre11 from Methanosarcina acetivorans (strain ATCC 35395 / DSM 2834 / JCM 12185 / C2A).